The primary structure comprises 197 residues: Probable UbiX-like flavin prenyltransferase (197 aa).

FMN-binding positions include G9 to T11, S36, S87 to T90, and R122.

The protein belongs to the UbiX/PAD1 family. YclB subfamily. Homododecamer.

The enzyme catalyses dimethylallyl phosphate + FMNH2 = prenylated FMNH2 + phosphate. Its function is as follows. Involved in the non-oxidative decarboxylation and detoxification of phenolic derivatives under both aerobic and anaerobic conditions. Flavin prenyltransferase that catalyzes the synthesis of the prenylated FMN cofactor (prenyl-FMN) for phenolic acid decarboxylase. This chain is Probable UbiX-like flavin prenyltransferase, found in Escherichia coli O157:H7.